Consider the following 454-residue polypeptide: Bifunctional protein GlmU (454 aa).

A pyrophosphorylase region spans residues 1–232 (MTDRTCLSIV…VDNVIGINNR (232 aa)). UDP-N-acetyl-alpha-D-glucosamine is bound by residues 11-14 (LAAG), K25, Q78, and 83-84 (GT). D108 is a binding site for Mg(2+). The UDP-N-acetyl-alpha-D-glucosamine site is built by G144, E158, N173, and N230. A Mg(2+)-binding site is contributed by N230. The linker stretch occupies residues 233–253 (VELAEAEAIWQQRKRREMMLA). The segment at 254-454 (GVTLIAPETV…AIKAAKTATK (201 aa)) is N-acetyltransferase. 2 residues coordinate UDP-N-acetyl-alpha-D-glucosamine: R319 and K337. H349 (proton acceptor) is an active-site residue. Y352 and N363 together coordinate UDP-N-acetyl-alpha-D-glucosamine. Residues A366, 372 to 373 (NY), S391, S409, and R426 contribute to the acetyl-CoA site.

It in the N-terminal section; belongs to the N-acetylglucosamine-1-phosphate uridyltransferase family. This sequence in the C-terminal section; belongs to the transferase hexapeptide repeat family. Homotrimer. Mg(2+) serves as cofactor.

It localises to the cytoplasm. It catalyses the reaction alpha-D-glucosamine 1-phosphate + acetyl-CoA = N-acetyl-alpha-D-glucosamine 1-phosphate + CoA + H(+). It carries out the reaction N-acetyl-alpha-D-glucosamine 1-phosphate + UTP + H(+) = UDP-N-acetyl-alpha-D-glucosamine + diphosphate. The protein operates within nucleotide-sugar biosynthesis; UDP-N-acetyl-alpha-D-glucosamine biosynthesis; N-acetyl-alpha-D-glucosamine 1-phosphate from alpha-D-glucosamine 6-phosphate (route II): step 2/2. It participates in nucleotide-sugar biosynthesis; UDP-N-acetyl-alpha-D-glucosamine biosynthesis; UDP-N-acetyl-alpha-D-glucosamine from N-acetyl-alpha-D-glucosamine 1-phosphate: step 1/1. Its pathway is bacterial outer membrane biogenesis; LPS lipid A biosynthesis. Functionally, catalyzes the last two sequential reactions in the de novo biosynthetic pathway for UDP-N-acetylglucosamine (UDP-GlcNAc). The C-terminal domain catalyzes the transfer of acetyl group from acetyl coenzyme A to glucosamine-1-phosphate (GlcN-1-P) to produce N-acetylglucosamine-1-phosphate (GlcNAc-1-P), which is converted into UDP-GlcNAc by the transfer of uridine 5-monophosphate (from uridine 5-triphosphate), a reaction catalyzed by the N-terminal domain. This chain is Bifunctional protein GlmU, found in Brucella anthropi (strain ATCC 49188 / DSM 6882 / CCUG 24695 / JCM 21032 / LMG 3331 / NBRC 15819 / NCTC 12168 / Alc 37) (Ochrobactrum anthropi).